Reading from the N-terminus, the 140-residue chain is Large-conductance mechanosensitive channel (140 aa).

The next 2 helical transmembrane spans lie at 21–41 and 82–102; these read VGVI…GDVI and GSFI…FMMI.

Belongs to the MscL family. In terms of assembly, homopentamer.

It localises to the cell inner membrane. Channel that opens in response to stretch forces in the membrane lipid bilayer. May participate in the regulation of osmotic pressure changes within the cell. The sequence is that of Large-conductance mechanosensitive channel from Leptothrix cholodnii (strain ATCC 51168 / LMG 8142 / SP-6) (Leptothrix discophora (strain SP-6)).